Consider the following 798-residue polypeptide: Vacuolar protein sorting-associated protein 53 homolog (798 aa).

It belongs to the VPS53 family. Component of the Golgi-associated retrograde protein (GARP) complex, also called VFT (VPS fifty-three) complex, composed of vps-51, vps-52, vps-53 and vps-54. Within the complex interacts with vps-51, vps-52 and vps-54. In terms of tissue distribution, ubiquitously expressed, with particularly strong expression in neuronal cells. Specifically expressed in head and tail neurons and in the pharynx and ventral cord motor neurons.

It is found in the golgi apparatus. The protein localises to the trans-Golgi network membrane. Its subcellular location is the endosome membrane. The protein resides in the perikaryon. It localises to the cytoplasm. It is found in the perinuclear region. Its function is as follows. Acts as a component of the GARP complex that is involved in retrograde transport from early and late endosomes to the trans-Golgi network (TGN). The GARP complex facilitates tethering as well as SNARE complex assembly at the Golgi. Plays a role in the trafficking of cargo to dense-core vesicles, probably through association with the EARP-interacting protein eipr-1. Important for neuronal function. This chain is Vacuolar protein sorting-associated protein 53 homolog, found in Caenorhabditis elegans.